The sequence spans 92 residues: Alpha-conotoxin-like Rt20.1 (92 aa).

The signal sequence occupies residues 1–24 (MPKLEMMLLVLLILPLSYFSAAGG). The propeptide occupies 25 to 45 (QVVQGDLRSDVLARYLQRGDR). Glutamate 49 is modified (4-carboxyglutamate). A 4-hydroxyproline modification is found at proline 55. 4 cysteine pairs are disulfide-bonded: cysteine 63–cysteine 72, cysteine 68–cysteine 80, cysteine 73–cysteine 90, and cysteine 78–cysteine 92.

The protein belongs to the conotoxin D superfamily. As to quaternary structure, hetero-, homo- or pseudo-homodimer (identical sequence, different post-translational modifications). In terms of tissue distribution, expressed by the venom duct.

It localises to the secreted. In terms of biological role, alpha-conotoxins act on postsynaptic membranes, they bind to the nicotinic acetylcholine receptors (nAChR) and thus inhibit them. Through its two C-terminal domains, this homodimeric protein would bind to two nAChR allosteric sites, located outside the nAChR C-loop of the principal binding face and at the adjacent binding interface in a clockwise direction. This toxin specifically blocks mammalian neuronal nAChR of the alpha-7/CHRNA7, alpha-3-beta-2/CHRNA3-CHRNB2 and alpha-4-beta-2/CHRNA4-CHRNB2 subtypes. In Conus rattus (Rat cone), this protein is Alpha-conotoxin-like Rt20.1.